The chain runs to 114 residues: Cytochrome c oxidase subunit 7A2-like, mitochondrial (114 aa).

Residues 1-55 constitute a mitochondrion transit peptide; sequence MYYKFSGFTQKLAGAWASDAYSPQGLRPVVSTEAPPIIFATPTKLSSGPTAYDYA. K69 carries the N6-acetyllysine modification. The helical transmembrane segment at 82–107 threads the bilayer; the sequence is PDQMLYRTTMALTVGGTIYCLIALYM.

The protein belongs to the cytochrome c oxidase VIIa family. In terms of assembly, interacts with the mitochondrial respiratory complexes III (CIII) and IV (CIV), promoting their association.

Its subcellular location is the mitochondrion inner membrane. In terms of biological role, assembly factor that mediates the formation of some mitochondrial respiratory supercomplexes (respirasomes), thereby promoting oxidative phosphorylation and energy metabolism. Acts as a molecular adapter that associates with both mitochondrial respiratory complexes III (CIII) and IV (CIV), promoting their association. Mediates the formation of various mitochondrial respiratory supercomplexes, such as MCIII(2)IV(2), composed of two CIII and two CIV, and the CS-respirasome (MCI(1)III(2)IV(2)), composed of one CI, two CIII and two CIV. Not involved in the formation of the canonical respirasome (MCI(1)III(2)IV(1)), composed of one CI, two CIII and one CIV. The formation of different respirasomes is important for cell adaptation to oxygen conditions and prevent metabolic exhaustion: supercomplexes mediated by COX7A2L/SCAF1 are required to maintain oxidative phosphorylation upon low oxygen conditions and promote metabolic rewiring toward glycolysis. The sequence is that of Cytochrome c oxidase subunit 7A2-like, mitochondrial from Bos taurus (Bovine).